The sequence spans 233 residues: Lipoprotein-releasing system ATP-binding protein LolD (233 aa).

The region spanning L9–R233 is the ABC transporter domain. Residue G45–S52 coordinates ATP.

It belongs to the ABC transporter superfamily. Lipoprotein translocase (TC 3.A.1.125) family. As to quaternary structure, the complex is composed of two ATP-binding proteins (LolD) and two transmembrane proteins (LolC and LolE).

The protein localises to the cell inner membrane. Its function is as follows. Part of the ABC transporter complex LolCDE involved in the translocation of mature outer membrane-directed lipoproteins, from the inner membrane to the periplasmic chaperone, LolA. Responsible for the formation of the LolA-lipoprotein complex in an ATP-dependent manner. The protein is Lipoprotein-releasing system ATP-binding protein LolD of Shewanella denitrificans (strain OS217 / ATCC BAA-1090 / DSM 15013).